The sequence spans 216 residues: Adenylate kinase (216 aa).

13 to 18 (GAGKGT) contributes to the ATP binding site. Residues 33–66 (TTGDALRANKTKDITHLDVEYDTPGAYMDAGELV) are NMP. Residues Thr-34, Arg-39, 64-66 (ELV), 89-92 (GYPR), and Gln-96 each bind AMP. Residues 125–162 (GRRVCEDCGATFHVSFNQPETEGVCDACGGSLYQREDD) form an LID region. Arg-126 is a binding site for ATP. Residues Cys-129 and Cys-132 each contribute to the Zn(2+) site. 135-136 (TF) provides a ligand contact to ATP. Residues Cys-149 and Cys-152 each contribute to the Zn(2+) site. Positions 159 and 170 each coordinate AMP. Arg-198 provides a ligand contact to ATP.

The protein belongs to the adenylate kinase family. Monomer.

It is found in the cytoplasm. The enzyme catalyses AMP + ATP = 2 ADP. It functions in the pathway purine metabolism; AMP biosynthesis via salvage pathway; AMP from ADP: step 1/1. Functionally, catalyzes the reversible transfer of the terminal phosphate group between ATP and AMP. Plays an important role in cellular energy homeostasis and in adenine nucleotide metabolism. This is Adenylate kinase from Halobacterium salinarum (strain ATCC 700922 / JCM 11081 / NRC-1) (Halobacterium halobium).